A 215-amino-acid chain; its full sequence is Ras-related protein Rab-42 (215 aa).

The GTP site is built by G19, G21, K22, T23, and T44. Mg(2+) is bound by residues T23, T44, and D68. G71, K128, D130, A157, and K158 together coordinate GTP. The segment at 196–215 (HRSPNPRSSSRKQDSGTCQC) is disordered. Residues C213 and C215 are each lipidated (S-geranylgeranyl cysteine).

It belongs to the small GTPase superfamily. Rab family. Requires Mg(2+) as cofactor.

The protein localises to the membrane. The catalysed reaction is GTP + H2O = GDP + phosphate + H(+). With respect to regulation, regulated by guanine nucleotide exchange factors (GEFs) which promote the exchange of bound GDP for free GTP. Regulated by GTPase activating proteins (GAPs) which increase the GTP hydrolysis activity. Inhibited by GDP dissociation inhibitors (GDIs). Functionally, the small GTPases Rab are key regulators of intracellular membrane trafficking, from the formation of transport vesicles to their fusion with membranes. Rabs cycle between an inactive GDP-bound form and an active GTP-bound form that is able to recruit to membranes different sets of downstream effectors directly responsible for vesicle formation, movement, tethering and fusion. The physiological function of RAB42 remains undefined. This is Ras-related protein Rab-42 from Mus musculus (Mouse).